A 280-amino-acid polypeptide reads, in one-letter code: MTASDPSVLSKPATGDTSFVVVIPARYQSSRLPGKVLADIDGKPMIQWVVEKAQLSGARQVIVATDNDEVAAVVNSFGAEVCKTRADHQSGTERLAEVMEKYQFSDDEIIVNVQGDEPFIPPDNIAQVANNLANQQQSSHVARMSTLAINIDSVDEAFNPNAVKVILDKDGYALYFSRATIPYDRERFLNSDATTEENIRAIGDFYLRHVGIYAYRAGFIKDYVNWPTSELEQVEALEQLRVLYQGERIHVAVANSHVPVEGVDTPEDLAKARAYATSLV.

The protein belongs to the KdsB family.

Its subcellular location is the cytoplasm. The enzyme catalyses 3-deoxy-alpha-D-manno-oct-2-ulosonate + CTP = CMP-3-deoxy-beta-D-manno-octulosonate + diphosphate. The protein operates within nucleotide-sugar biosynthesis; CMP-3-deoxy-D-manno-octulosonate biosynthesis; CMP-3-deoxy-D-manno-octulosonate from 3-deoxy-D-manno-octulosonate and CTP: step 1/1. It participates in bacterial outer membrane biogenesis; lipopolysaccharide biosynthesis. Functionally, activates KDO (a required 8-carbon sugar) for incorporation into bacterial lipopolysaccharide in Gram-negative bacteria. The polypeptide is 3-deoxy-manno-octulosonate cytidylyltransferase (Colwellia psychrerythraea (strain 34H / ATCC BAA-681) (Vibrio psychroerythus)).